A 159-amino-acid polypeptide reads, in one-letter code: Protein Smg homolog (159 aa).

This sequence belongs to the Smg family.

The protein is Protein Smg homolog of Dichelobacter nodosus (strain VCS1703A).